A 123-amino-acid chain; its full sequence is Small ribosomal subunit protein cS23 (123 aa).

Belongs to the chloroplast-specific ribosomal protein cS23 family. In terms of assembly, part of the 30S ribosomal subunit.

The protein resides in the plastid. It localises to the chloroplast. Its function is as follows. Probably a ribosomal protein or a ribosome-associated protein. The polypeptide is Small ribosomal subunit protein cS23 (ycf65) (Mesostigma viride (Green alga)).